Reading from the N-terminus, the 291-residue chain is ATP synthase gamma chain (291 aa).

The protein belongs to the ATPase gamma chain family. As to quaternary structure, F-type ATPases have 2 components, CF(1) - the catalytic core - and CF(0) - the membrane proton channel. CF(1) has five subunits: alpha(3), beta(3), gamma(1), delta(1), epsilon(1). CF(0) has three main subunits: a, b and c.

It is found in the cell membrane. Its function is as follows. Produces ATP from ADP in the presence of a proton gradient across the membrane. The gamma chain is believed to be important in regulating ATPase activity and the flow of protons through the CF(0) complex. This is ATP synthase gamma chain from Streptococcus uberis (strain ATCC BAA-854 / 0140J).